The chain runs to 201 residues: Charged multivesicular body protein 6 (201 aa).

The N-myristoyl glycine moiety is linked to residue glycine 2. Residues 10-145 (QSRVTEQDKA…YQRQIDELLA (136 aa)) are a coiled coil. Serine 119 bears the Phosphoserine mark. The residue at position 130 (threonine 130) is a Phosphothreonine. Residues 168 to 179 (IELPEVPSEPLP) carry the Type-2 MIT-interacting motif motif. The interval 171-201 (PEVPSEPLPEKIPEDVPVKARPRQAELVAAS) is disordered. The span at 178–188 (LPEKIPEDVPV) shows a compositional bias: basic and acidic residues.

The protein belongs to the SNF7 family. As to quaternary structure, probable core component of the endosomal sorting required for transport complex III (ESCRT-III). ESCRT-III components are thought to multimerize to form a flat lattice on the perimeter membrane of the endosome. Several assembly forms of ESCRT-III may exist that interact and act sequentially. Interacts with VPS4A; the interaction is direct. Interacts with VPS4B; the interaction is direct. Interacts with CHMP4A, CHMP4B and CHMP4C. Interacts with SNF8, VPS25 and VPS36. ISGylated in a CHMP5-dependent manner. Isgylation weakens its interaction with VPS4A.

Its subcellular location is the endomembrane system. The protein resides in the endosome membrane. It localises to the late endosome membrane. It is found in the membrane. Functionally, probable core component of the endosomal sorting required for transport complex III (ESCRT-III) which is involved in multivesicular bodies (MVBs) formation and sorting of endosomal cargo proteins into MVBs. MVBs contain intraluminal vesicles (ILVs) that are generated by invagination and scission from the limiting membrane of the endosome and mostly are delivered to lysosomes enabling degradation of membrane proteins, such as stimulated growth factor receptors, lysosomal enzymes and lipids. The MVB pathway appears to require the sequential function of ESCRT-O, -I,-II and -III complexes. ESCRT-III proteins mostly dissociate from the invaginating membrane before the ILV is released. The ESCRT machinery also functions in topologically equivalent membrane fission events, such as the terminal stages of cytokinesis and the budding of enveloped viruses (lentiviruses). ESCRT-III proteins are believed to mediate the necessary vesicle extrusion and/or membrane fission activities, possibly in conjunction with the AAA ATPase VPS4. In the ESCRT-III complex, it probably serves as an acceptor for the ESCRT-II complex on endosomal membrane. This chain is Charged multivesicular body protein 6 (CHMP6), found in Pongo abelii (Sumatran orangutan).